A 116-amino-acid polypeptide reads, in one-letter code: Iron-sulfur cluster insertion protein ErpA (116 aa).

Iron-sulfur cluster-binding residues include C44, C108, and C110.

It belongs to the HesB/IscA family. Homodimer. The cofactor is iron-sulfur cluster.

In terms of biological role, required for insertion of 4Fe-4S clusters for at least IspG. In Shewanella baltica (strain OS223), this protein is Iron-sulfur cluster insertion protein ErpA.